We begin with the raw amino-acid sequence, 222 residues long: L-serine dehydratase, beta chain (222 aa).

One can recognise an ACT domain in the interval 150–222 (TILLEYPEQR…RFTTAKYVEV (73 aa)).

Belongs to the iron-sulfur dependent L-serine dehydratase family. Heterooctamer of four alpha chains and four beta chains. Requires [4Fe-4S] cluster as cofactor.

It catalyses the reaction L-serine = pyruvate + NH4(+). Its pathway is carbohydrate biosynthesis; gluconeogenesis. The polypeptide is L-serine dehydratase, beta chain (sdhB) (Peptoniphilus asaccharolyticus (Peptostreptococcus asaccharolyticus)).